Here is a 79-residue protein sequence, read N- to C-terminus: Small ribosomal subunit protein bS18 (79 aa).

Part of the 30S ribosomal subunit. Forms a tight heterodimer with protein bS6. Post-translationally, both N-terminus methionine truncation and retention have been observed for this protein. In terms of processing, may be methylated up to 6 times, on undetermined residues.

Functionally, binds as a heterodimer with protein bS6 to the central domain of the 16S rRNA, where it helps stabilize the platform of the 30S subunit. The sequence is that of Small ribosomal subunit protein bS18 from Rhodopseudomonas palustris (strain ATCC BAA-98 / CGA009).